A 501-amino-acid polypeptide reads, in one-letter code: G protein-activated inward rectifier potassium channel 1 (501 aa).

Positions 1–40 (MSALRRKFGDDYQVVTTSSSGSGLQPQGPGQDPQQQLVPK) are disordered. Residues 1 to 80 (MSALRRKFGD…LFTTLVDLKW (80 aa)) lie on the Cytoplasmic side of the membrane. Positions 18 to 38 (SSSGSGLQPQGPGQDPQQQLV) are enriched in low complexity. The chain crosses the membrane as a helical span at residues 81 to 105 (RWNLFIFILTYTVAWLFMASMWWVI). Residues 106-129 (AYTRGDLNKAHVGNYTPCVANVYN) lie on the Extracellular side of the membrane. Asparagine 119 is a glycosylation site (N-linked (GlcNAc...) asparagine). The helical; Pore-forming intramembrane region spans 130 to 141 (FPSAFLFFIETE). An intramembrane region (pore-forming) is located at residues 142–148 (ATIGYGY). The Selectivity filter signature appears at 143 to 148 (TIGYGY). The Extracellular segment spans residues 149 to 157 (RYITDKCPE). The helical transmembrane segment at 158–179 (GIILFLFQSILGSIVDAFLIGC) threads the bilayer. Residues 180–501 (MFIKMSQPKK…LRKMNSDRFT (322 aa)) are Cytoplasmic-facing. The interval 182–209 (IKMSQPKKRAETLMFSEHAVISMRDGKL) is polyphosphoinositide (PIP2)-binding. Serine 385 and serine 424 each carry phosphoserine.

The protein belongs to the inward rectifier-type potassium channel (TC 1.A.2.1) family. KCNJ3 subfamily. As to quaternary structure, associates with KCNJ5/GIRK4 or KCNJ6/GIRK2 to form a G-protein activated heteromultimer pore-forming unit. The resulting inward current is much larger. Associates with KCNJ9/GIRK3 to form a G-protein activated heteromultimer pore-forming unit.

It is found in the membrane. The enzyme catalyses K(+)(in) = K(+)(out). Its activity is regulated as follows. Heteromultimer composed of KCNJ3/GIRK1 and KCNJ5/GIRK4 is activated by phosphatidylinositol 4,5 biphosphate (PtdIns(4,5)P2). Its function is as follows. Inward rectifier potassium channels are characterized by a greater tendency to allow potassium to flow into the cell rather than out of it. Their voltage dependence is regulated by the concentration of extracellular potassium; as external potassium is raised, the voltage range of the channel opening shifts to more positive voltages. The inward rectification is mainly due to the blockage of outward current by internal magnesium. This potassium channel is controlled by G proteins. This receptor plays a crucial role in regulating the heartbeat. The polypeptide is G protein-activated inward rectifier potassium channel 1 (KCNJ3) (Homo sapiens (Human)).